Consider the following 458-residue polypeptide: V-type ATP synthase beta chain (458 aa).

The protein belongs to the ATPase alpha/beta chains family.

Its function is as follows. Produces ATP from ADP in the presence of a proton gradient across the membrane. The V-type beta chain is a regulatory subunit. In Enterococcus faecalis (strain ATCC 700802 / V583), this protein is V-type ATP synthase beta chain.